Here is a 949-residue protein sequence, read N- to C-terminus: Valine--tRNA ligase (949 aa).

The 'HIGH' region signature appears at 40–50 (PNVTGSLHMGH). The 'KMSKS' region motif lies at 553–557 (KMSKS). Position 556 (K556) interacts with ATP. Residues 877 to 949 (MAGLIDKEAE…QEQQDKIKAL (73 aa)) adopt a coiled-coil conformation.

This sequence belongs to the class-I aminoacyl-tRNA synthetase family. ValS type 1 subfamily. In terms of assembly, monomer.

The protein resides in the cytoplasm. It catalyses the reaction tRNA(Val) + L-valine + ATP = L-valyl-tRNA(Val) + AMP + diphosphate. Its function is as follows. Catalyzes the attachment of valine to tRNA(Val). As ValRS can inadvertently accommodate and process structurally similar amino acids such as threonine, to avoid such errors, it has a 'posttransfer' editing activity that hydrolyzes mischarged Thr-tRNA(Val) in a tRNA-dependent manner. In Idiomarina loihiensis (strain ATCC BAA-735 / DSM 15497 / L2-TR), this protein is Valine--tRNA ligase.